The following is a 199-amino-acid chain: MFALFIWSFMAIILGIDPGSRVTGYGIIRQTGRTLEYLGSGAIRTQVEDLPTRLKRIYAGVTEIITQFRPDMFAIEEVFLAKNPNSALKLGQARGTAIVAAVNQNLPVFEYAARLVKQTVTGSGSADKVQVQDMVTRILRLSDKPQADAADALAIAITHAHTIQHSLQVATSAKSTENHEKTTALLRTRYSRGRFRLKI.

Residues Asp-17, Glu-76, and Asp-148 contribute to the active site. Residues Asp-17, Glu-76, and Asp-148 each contribute to the Mg(2+) site.

This sequence belongs to the RuvC family. Homodimer which binds Holliday junction (HJ) DNA. The HJ becomes 2-fold symmetrical on binding to RuvC with unstacked arms; it has a different conformation from HJ DNA in complex with RuvA. In the full resolvosome a probable DNA-RuvA(4)-RuvB(12)-RuvC(2) complex forms which resolves the HJ. Requires Mg(2+) as cofactor.

It localises to the cytoplasm. The catalysed reaction is Endonucleolytic cleavage at a junction such as a reciprocal single-stranded crossover between two homologous DNA duplexes (Holliday junction).. Its function is as follows. The RuvA-RuvB-RuvC complex processes Holliday junction (HJ) DNA during genetic recombination and DNA repair. Endonuclease that resolves HJ intermediates. Cleaves cruciform DNA by making single-stranded nicks across the HJ at symmetrical positions within the homologous arms, yielding a 5'-phosphate and a 3'-hydroxyl group; requires a central core of homology in the junction. The consensus cleavage sequence is 5'-(A/T)TT(C/G)-3'. Cleavage occurs on the 3'-side of the TT dinucleotide at the point of strand exchange. HJ branch migration catalyzed by RuvA-RuvB allows RuvC to scan DNA until it finds its consensus sequence, where it cleaves and resolves the cruciform DNA. The polypeptide is Crossover junction endodeoxyribonuclease RuvC (Mannheimia succiniciproducens (strain KCTC 0769BP / MBEL55E)).